Here is a 564-residue protein sequence, read N- to C-terminus: Kelch repeat and BTB domain-containing protein 1 (564 aa).

One can recognise a BTB domain in the interval 21 to 88 (CDIDIVINDE…IYGIPLSLTN (68 aa)). One can recognise a BACK domain in the interval 123 to 219 (CIDFYIYADK…SLLSPQVIKS (97 aa)). 6 Kelch repeats span residues 252-297 (IELI…VLDN), 298-346 (IIYM…ADDE), 347-395 (YIYC…MLNG), 397-441 (IYVI…VHAG), 442-492 (KIYI…SVHN), and 494-539 (LYVG…CEPI).

In terms of assembly, interacts (via BTB domain) with host CUL3.

It localises to the host cytoplasm. Its function is as follows. Probable substrate-specific adapter of CUL3-containing E3 ubiquitin-protein ligases which mediate the ubiquitination and subsequent proteasomal degradation of host target proteins. The sequence is that of Kelch repeat and BTB domain-containing protein 1 (KBTB1) from Camelus.